Reading from the N-terminus, the 169-residue chain is Peptide methionine sulfoxide reductase MsrA (169 aa).

C10 is a catalytic residue.

The protein belongs to the MsrA Met sulfoxide reductase family.

The catalysed reaction is L-methionyl-[protein] + [thioredoxin]-disulfide + H2O = L-methionyl-(S)-S-oxide-[protein] + [thioredoxin]-dithiol. It catalyses the reaction [thioredoxin]-disulfide + L-methionine + H2O = L-methionine (S)-S-oxide + [thioredoxin]-dithiol. Has an important function as a repair enzyme for proteins that have been inactivated by oxidation. Catalyzes the reversible oxidation-reduction of methionine sulfoxide in proteins to methionine. This is Peptide methionine sulfoxide reductase MsrA from Streptococcus pyogenes serotype M28 (strain MGAS6180).